Reading from the N-terminus, the 39-residue chain is Photosystem II reaction center protein L (39 aa).

Residues 18 to 38 form a helical membrane-spanning segment; the sequence is SLYLGLLSVFVLGILFSSYFF.

The protein belongs to the PsbL family. PSII is composed of 1 copy each of membrane proteins PsbA, PsbB, PsbC, PsbD, PsbE, PsbF, PsbH, PsbI, PsbJ, PsbK, PsbL, PsbM, PsbT, PsbX, PsbY, Psb30/Ycf12, peripheral proteins PsbO, CyanoQ (PsbQ), PsbU, PsbV and a large number of cofactors. It forms dimeric complexes.

The protein resides in the cellular thylakoid membrane. Its function is as follows. One of the components of the core complex of photosystem II (PSII). PSII is a light-driven water:plastoquinone oxidoreductase that uses light energy to abstract electrons from H(2)O, generating O(2) and a proton gradient subsequently used for ATP formation. It consists of a core antenna complex that captures photons, and an electron transfer chain that converts photonic excitation into a charge separation. This subunit is found at the monomer-monomer interface and is required for correct PSII assembly and/or dimerization. The sequence is that of Photosystem II reaction center protein L from Prochlorococcus marinus (strain MIT 9301).